Reading from the N-terminus, the 242-residue chain is 7-cyano-7-deazaguanine synthase (242 aa).

Residue 14–24 (FSGGQDSATCL) coordinates ATP. 4 residues coordinate Zn(2+): cysteine 202, cysteine 217, cysteine 220, and cysteine 223.

It belongs to the QueC family. Zn(2+) serves as cofactor.

The catalysed reaction is 7-carboxy-7-deazaguanine + NH4(+) + ATP = 7-cyano-7-deazaguanine + ADP + phosphate + H2O + H(+). It functions in the pathway purine metabolism; 7-cyano-7-deazaguanine biosynthesis. Its function is as follows. Catalyzes the ATP-dependent conversion of 7-carboxy-7-deazaguanine (CDG) to 7-cyano-7-deazaguanine (preQ(0)). The polypeptide is 7-cyano-7-deazaguanine synthase (Rhodopseudomonas palustris (strain BisA53)).